A 123-amino-acid polypeptide reads, in one-letter code: Small ribosomal subunit protein uS17 (123 aa).

Belongs to the universal ribosomal protein uS17 family. Part of the 30S ribosomal subunit.

In terms of biological role, one of the primary rRNA binding proteins, it binds specifically to the 5'-end of 16S ribosomal RNA. This Pyrobaculum aerophilum (strain ATCC 51768 / DSM 7523 / JCM 9630 / CIP 104966 / NBRC 100827 / IM2) protein is Small ribosomal subunit protein uS17.